Reading from the N-terminus, the 120-residue chain is Ig heavy chain V region 36-65 (120 aa).

The 111-residue stretch at 1 to 111 folds into the Ig-like domain; it reads VQLQQSGAEL…GGSYYFDYWG (111 aa).

This is Ig heavy chain V region 36-65 from Mus musculus (Mouse).